Consider the following 247-residue polypeptide: Ras-like protein family member 11B (247 aa).

Residues 29 to 247 (ASSRVIKIAV…SAKVRTATSV (219 aa)) form a small GTPase-like region. Residues 40–47 (GGSGVGKT), 87–91 (DTPGV), and 152–155 (NKAD) each bind GTP. The interval 205–228 (QNTGTPERRKNSLIPRPKSPNMQD) is disordered.

This sequence belongs to the small GTPase superfamily. Ras family.

It catalyses the reaction GTP + H2O = GDP + phosphate + H(+). The protein is Ras-like protein family member 11B of Xenopus tropicalis (Western clawed frog).